The following is a 56-amino-acid chain: UPF0434 protein WIGBR2520 (56 aa).

It belongs to the UPF0434 family.

This is UPF0434 protein WIGBR2520 from Wigglesworthia glossinidia brevipalpis.